The following is a 427-amino-acid chain: Tumor necrosis factor receptor superfamily member 16 (427 aa).

Positions M1–A31 are cleaved as a signal peptide. The Extracellular portion of the chain corresponds to K32–L254. TNFR-Cys repeat units lie at residues T34 to C67, P69 to C110, R111 to C149, and E151 to C191. 12 disulfide bridges follow: C35–C46, C47–C60, C50–C67, C70–C86, C89–C102, C92–C110, C112–C125, C128–C141, C131–C149, C152–C167, C170–C183, and C173–C191. Residue N63 is glycosylated (N-linked (GlcNAc...) asparagine). The tract at residues R197–E223 is disordered. Polar residues predominate over residues T200 to E217. Residues I255 to F275 form a helical membrane-spanning segment. Topologically, residues K276–V427 are cytoplasmic. Composition is skewed to polar residues over residues N284–N294 and S308–G329. The interval N284–G334 is disordered. At S314 the chain carries Phosphoserine. Positions G329–L344 are mediates interaction with KIDINS220. The 66-residue stretch at G356–S421 folds into the Death domain.

In terms of assembly, homodimer; disulfide-linked. Heterodimer with SORCS2. The extracellular domains of the heterodimer bind NGF. The cytoplasmic region of the heterodimer binds TRIO. NGF binding mediates dissociation of TRIO from the receptor complex. Interacts with TRAF2, TRAF4, TRAF6, PTPN13 and RANBP9. Interacts through TRAF6 with SQSTM1 which bridges NGFR to NTRK1. Interacts with BEX1. Interacts with BEX3. Interacts with KIDINS220 and NTRK1. Can form a ternary complex with NTRK1 and KIDINS220 and this complex is affected by the expression levels of KIDINS220. An increase in KIDINS220 expression leads to a decreased association of NGFR and NTRK1. Interacts (via death domain) with RAB31. Interacts with NTRK2; may regulate the ligand specificity of the NTRK2 receptor. Interacts with LINGO1. Interacts with NRADD. Interacts with MAGED1; the interaction antagonizes the association NGFR:NTRK1. Interacts with RTN4R. Interacts (via death domain) with ARHGDIA and RIPK2. Interacts with BFAR. (Microbial infection) Binds to rabies virus glycoprotein Gs. Post-translationally, N-glycosylated. O-glycosylated. In terms of processing, phosphorylated on serine residues. In terms of tissue distribution, detected in Schwann cells. Detected in embryonic brain, in hippocampus neurons (at protein level). Detected in brain and spinal cord.

The protein resides in the cell membrane. The protein localises to the cytoplasm. It is found in the perikaryon. It localises to the cell projection. Its subcellular location is the growth cone. The protein resides in the dendritic spine. Its function is as follows. Low affinity neurotrophin receptor which can bind to mature NGF, BDNF, NTF3, and NTF4. Forms a heterodimeric receptor with SORCS2 that binds the precursor forms of NGF (proNGF), BDNF (proBDNF) and NTF3 (proNT3) with high affinity, and has much lower affinity for mature NGF and BDNF. Plays an important role in differentiation and survival of specific neuronal populations during development. Can mediate cell survival as well as cell death of neural cells. The heterodimeric receptor formed with SORCS2 plays a role in proBDNF-dependent synaptic plasticity, in hippocampal long term depression (LTD) and long term potentiation (LTP). Plays a role in the inactivation of RHOA. Plays a role in the regulation of the translocation of GLUT4 to the cell surface in adipocytes and skeletal muscle cells in response to insulin, probably by regulating RAB31 activity, and thereby contributes to the regulation of insulin-dependent glucose uptake. Necessary for the circadian oscillation of the clock genes BMAL1, PER1, PER2 and NR1D1 in the suprachiasmatic nucleus (SCN) of the brain and in liver and of the genes involved in glucose and lipid metabolism in the liver. (Microbial infection) Cell surface receptor for rabies virus glycoprotein Gs. In terms of biological role, does not bind NGF, BDNF, NTF3, and NTF4. The protein is Tumor necrosis factor receptor superfamily member 16 (Ngfr) of Mus musculus (Mouse).